The sequence spans 338 residues: 3-keto-steroid reductase erg27 (338 aa).

4 residues coordinate NADP(+): L16, T44, K50, and D75. Active-site proton donor residues include S180 and Y203. NADP(+) is bound by residues Y203, K207, and T236. Catalysis depends on K207, which acts as the Lowers pKa of active site Tyr.

This sequence belongs to the short-chain dehydrogenases/reductases (SDR) family. ERG27 subfamily. In terms of assembly, heterotetramer of erg25, erg26, erg27 and erg28. Erg28 acts as a scaffold to tether erg27 and other 4,4-demethylation-related enzymes, forming a demethylation enzyme complex, in the endoplasmic reticulum.

It catalyses the reaction 3-dehydro-4alpha-methylzymosterol + NADPH + H(+) = 4alpha-methylzymosterol + NADP(+). It participates in steroid biosynthesis; zymosterol biosynthesis; zymosterol from lanosterol: step 5/6. It functions in the pathway steroid metabolism; ergosterol biosynthesis. Its function is as follows. 3-keto-steroid reductase; part of the third module of ergosterol biosynthesis pathway that includes by the late steps of the pathway. Erg27 is a catalytic component of the C-4 demethylation complex that catalyze the reduction of the keto group on the C-3. The third module or late pathway involves the ergosterol synthesis itself through consecutive reactions that mainly occur in the endoplasmic reticulum (ER) membrane. Firstly, the squalene synthase erg9 catalyzes the condensation of 2 farnesyl pyrophosphate moieties to form squalene, which is the precursor of all steroids. Secondly, squalene is converted into lanosterol by the consecutive action of the squalene epoxidase erg1 and the lanosterol synthase erg7. The lanosterol 14-alpha-demethylase erg11/cyp1 catalyzes C14-demethylation of lanosterol to produce 4,4'-dimethyl cholesta-8,14,24-triene-3-beta-ol. In the next steps, a complex process involving various demethylation, reduction and desaturation reactions catalyzed by the C-14 reductase erg24 and the C-4 demethylation complex erg25-erg26-erg27 leads to the production of zymosterol. Erg28 likely functions in the C-4 demethylation complex reaction by tethering erg26 and Erg27 to the endoplasmic reticulum or to facilitate interaction between these proteins. Then, the sterol 24-C-methyltransferase erg6 catalyzes the methyl transfer from S-adenosyl-methionine to the C-24 of zymosterol to form fecosterol. The C-8 sterol isomerase erg2 catalyzes the reaction which results in unsaturation at C-7 in the B ring of sterols and thus converts fecosterol to episterol. The sterol-C5-desaturases erg31 and erg32 then catalyze the introduction of a C-5 double bond in the B ring to produce 5-dehydroepisterol. The C-22 sterol desaturase erg5 further converts 5-dehydroepisterol into ergosta-5,7,22,24(28)-tetraen-3beta-ol by forming the C-22(23) double bond in the sterol side chain. Finally, ergosta-5,7,22,24(28)-tetraen-3beta-ol is substrate of the C-24(28) sterol reductase erg4 to produce ergosterol. In the genus Schizosaccharomyces, a second route exists between lanosterol and fecosterol, via the methylation of lanosterol to eburicol by erg6, followed by C14-demethylation by erg11/cyp1 and C4-demethylation by the demethylation complex erg25-erg26-erg27. The polypeptide is 3-keto-steroid reductase erg27 (Schizosaccharomyces pombe (strain 972 / ATCC 24843) (Fission yeast)).